Here is an 876-residue protein sequence, read N- to C-terminus: Paramyosin (876 aa).

Positions 1–28 (MSARSAKFMYRSGNAGASGDLSVEYGTD) are nonhelical region. The stretch at 29-855 (LGALTRLEDK…IRAKHRSWVT (827 aa)) forms a coiled coil. Residues 856–876 (TSQVPGGTRQVFVTQEEQSNY) form a nonhelical region region.

This sequence belongs to the paramyosin family. As to quaternary structure, homodimer.

It is found in the cytoplasm. It localises to the myofibril. Paramyosin is a major structural component of many thick filaments isolated from invertebrate muscles. The protein is Paramyosin of Sarcoptes scabiei (Itch mite).